We begin with the raw amino-acid sequence, 375 residues long: tRNA-specific 2-thiouridylase MnmA (375 aa).

ATP contacts are provided by residues Ala-9–Ser-16 and Leu-35. Cys-105 acts as the Nucleophile in catalysis. Residues Cys-105 and Cys-201 are joined by a disulfide bond. Residue Gly-129 coordinates ATP. An interaction with tRNA region spans residues Lys-151–Gln-153. Cys-201 (cysteine persulfide intermediate) is an active-site residue. Positions Arg-307–Tyr-308 are interaction with tRNA.

Belongs to the MnmA/TRMU family.

It localises to the cytoplasm. The enzyme catalyses S-sulfanyl-L-cysteinyl-[protein] + uridine(34) in tRNA + AH2 + ATP = 2-thiouridine(34) in tRNA + L-cysteinyl-[protein] + A + AMP + diphosphate + H(+). Functionally, catalyzes the 2-thiolation of uridine at the wobble position (U34) of tRNA, leading to the formation of s(2)U34. This Leptospira interrogans serogroup Icterohaemorrhagiae serovar Lai (strain 56601) protein is tRNA-specific 2-thiouridylase MnmA.